We begin with the raw amino-acid sequence, 294 residues long: Glutamate-binding protein GluB (294 aa).

An N-terminal signal peptide occupies residues 1–26 (MSHKRMFTRLAAATSAAVLAGITLTA). A lipid anchor (N-palmitoyl cysteine) is attached at cysteine 27. A lipid anchor (S-diacylglycerol cysteine) is attached at cysteine 27.

Belongs to the bacterial solute-binding protein 3 family. As to quaternary structure, the complex is composed of two ATP-binding proteins (GluA), two transmembrane proteins (GluC and GluD) and a solute-binding protein (GluB).

It localises to the cell membrane. In terms of biological role, part of the ABC transporter complex GluABCD involved in glutamate uptake. Binds glutamate with a high affinity. The chain is Glutamate-binding protein GluB from Corynebacterium efficiens (strain DSM 44549 / YS-314 / AJ 12310 / JCM 11189 / NBRC 100395).